A 524-amino-acid polypeptide reads, in one-letter code: Chromosomal replication initiator protein DnaA (524 aa).

A domain I, interacts with DnaA modulators region spans residues 1–73 (MELPESAWEQ…DELLSSADHH (73 aa)). The domain II stretch occupies residues 73-187 (HPITSVEISV…DVEGGLQHKS (115 aa)). 3 stretches are compositionally biased toward polar residues: residues 86–95 (RSTSFETNQG), 106–126 (APRQNIASSQPSNSYSRQPQQ), and 153–165 (NGYNTESFAQPYN). The disordered stretch occupies residues 86–173 (RSTSFETNQG…YNDNPMGQGK (88 aa)). The interval 188–404 (NLNPTFIFDN…GALKRVIANA (217 aa)) is domain III, AAA+ region. Residues G232, G234, K235, and T236 each coordinate ATP. Residues 405 to 524 (HFTGRDISVE…VKNLLRTLTT (120 aa)) are domain IV, binds dsDNA.

The protein belongs to the DnaA family. In terms of assembly, oligomerizes as a right-handed, spiral filament on DNA at oriC.

Its subcellular location is the cytoplasm. Functionally, plays an essential role in the initiation and regulation of chromosomal replication. ATP-DnaA binds to the origin of replication (oriC) to initiate formation of the DNA replication initiation complex once per cell cycle. Binds the DnaA box (a 9 base pair repeat at the origin) and separates the double-stranded (ds)DNA. Forms a right-handed helical filament on oriC DNA; dsDNA binds to the exterior of the filament while single-stranded (ss)DNA is stabiized in the filament's interior. The ATP-DnaA-oriC complex binds and stabilizes one strand of the AT-rich DNA unwinding element (DUE), permitting loading of DNA polymerase. After initiation quickly degrades to an ADP-DnaA complex that is not apt for DNA replication. Binds acidic phospholipids. This is Chromosomal replication initiator protein DnaA from Saccharophagus degradans (strain 2-40 / ATCC 43961 / DSM 17024).